Consider the following 385-residue polypeptide: MEQLTPDGGVTKRIIKAGLGQRPEPTNFVSVHYDAYLLDTSEKFDSSRDRNTEFTFQLRDSKVIEAWELAIPTMQVGELAEIICTSDYGYGDQGRQYIVPPRAQLRFEVELIGFWEKPKSASERIRLAEKKKNEGNALFKLDAIESALFAYRKGREYIQDLWDCEPEELEEARQLIVSIQLNIGACHLKLKHYDHAIEVCQKALDRDMTKIKAYYRIGQAYMEKGDYESSLTFIRIGLETAIGLLAQSIDLIENTLTDNEQFIHESKVMPSSTIVTVLNYDKRDRNIPAENDRWAAKERIIKIQKTIEENSKISLDTPLVLSATIDASDSHQYQFQSSFGRELFYCSIHAIHHYASIKAICIELGLSVPSHFGLAPSTLQHIKKQ.

The 90-residue stretch at 26-115 folds into the PPIase FKBP-type domain; it reads TNFVSVHYDA…RFEVELIGFW (90 aa). TPR repeat units follow at residues 128-161, 177-210, and 211-244; these read AEKK…IQDL, VSIQ…DMTK, and IKAY…AIGL.

It catalyses the reaction [protein]-peptidylproline (omega=180) = [protein]-peptidylproline (omega=0). Inhibited by both FK506 and rapamycin. PPIases accelerate the folding of proteins. It catalyzes the cis-trans isomerization of proline imidic peptide bonds in oligopeptides. The polypeptide is FK506-binding protein 5 (FKBP5) (Rhizopus delemar (strain RA 99-880 / ATCC MYA-4621 / FGSC 9543 / NRRL 43880) (Mucormycosis agent)).